The chain runs to 252 residues: 3-dehydroquinate dehydratase (252 aa).

Residues serine 21, 46 to 48, and arginine 82 each bind 3-dehydroquinate; that span reads EWR. The active-site Proton donor/acceptor is the histidine 143. Residue lysine 170 is the Schiff-base intermediate with substrate of the active site. Residues arginine 213, serine 232, and glutamine 236 each coordinate 3-dehydroquinate.

This sequence belongs to the type-I 3-dehydroquinase family. Homodimer.

The catalysed reaction is 3-dehydroquinate = 3-dehydroshikimate + H2O. Its pathway is metabolic intermediate biosynthesis; chorismate biosynthesis; chorismate from D-erythrose 4-phosphate and phosphoenolpyruvate: step 3/7. Functionally, involved in the third step of the chorismate pathway, which leads to the biosynthesis of aromatic amino acids. Catalyzes the cis-dehydration of 3-dehydroquinate (DHQ) and introduces the first double bond of the aromatic ring to yield 3-dehydroshikimate. This is 3-dehydroquinate dehydratase from Escherichia coli O17:K52:H18 (strain UMN026 / ExPEC).